We begin with the raw amino-acid sequence, 356 residues long: Molybdenum import ATP-binding protein ModC (356 aa).

The ABC transporter domain occupies 1–232; sequence MEDIHARFHI…LDLPIRLGED (232 aa). 33–40 is an ATP binding site; sequence GHSGSGKT. The Mop domain occupies 291–356; the sequence is ETSVLNLLRG…VQVKSVALME (66 aa).

It belongs to the ABC transporter superfamily. Molybdate importer (TC 3.A.1.8) family. As to quaternary structure, the complex is composed of two ATP-binding proteins (ModC), two transmembrane proteins (ModB) and a solute-binding protein (ModA).

It is found in the cell inner membrane. It carries out the reaction molybdate(out) + ATP + H2O = molybdate(in) + ADP + phosphate + H(+). In terms of biological role, part of the ABC transporter complex ModABC involved in molybdenum import. Responsible for energy coupling to the transport system. This is Molybdenum import ATP-binding protein ModC from Methylococcus capsulatus (strain ATCC 33009 / NCIMB 11132 / Bath).